Consider the following 88-residue polypeptide: Putative membrane protein insertion efficiency factor (88 aa).

The disordered stretch occupies residues 68-88 (VPPPNSDTRARGEADARSHRL). Residues 75–88 (TRARGEADARSHRL) are compositionally biased toward basic and acidic residues.

Belongs to the UPF0161 family.

The protein resides in the cell inner membrane. In terms of biological role, could be involved in insertion of integral membrane proteins into the membrane. This chain is Putative membrane protein insertion efficiency factor, found in Burkholderia cenocepacia (strain ATCC BAA-245 / DSM 16553 / LMG 16656 / NCTC 13227 / J2315 / CF5610) (Burkholderia cepacia (strain J2315)).